A 548-amino-acid polypeptide reads, in one-letter code: Lysine--tRNA ligase (548 aa).

The 'HIGH' region motif lies at 43–51; it reads PSGVPHLGN. The 'KMSKS' region signature appears at 308-312; it reads PFSSS.

The protein belongs to the class-I aminoacyl-tRNA synthetase family.

Its subcellular location is the cytoplasm. The catalysed reaction is tRNA(Lys) + L-lysine + ATP = L-lysyl-tRNA(Lys) + AMP + diphosphate. This Halobacterium salinarum (strain ATCC 700922 / JCM 11081 / NRC-1) (Halobacterium halobium) protein is Lysine--tRNA ligase.